The sequence spans 423 residues: Histidine--tRNA ligase (423 aa).

This sequence belongs to the class-II aminoacyl-tRNA synthetase family. As to quaternary structure, homodimer.

Its subcellular location is the cytoplasm. It carries out the reaction tRNA(His) + L-histidine + ATP = L-histidyl-tRNA(His) + AMP + diphosphate + H(+). The protein is Histidine--tRNA ligase of Rhodococcus opacus (strain B4).